A 440-amino-acid chain; its full sequence is Adenylosuccinate synthetase (440 aa).

GTP is bound by residues 14–20 (GDEGKGK) and 42–44 (GHT). Asp15 serves as the catalytic Proton acceptor. Asp15 and Gly42 together coordinate Mg(2+). Residues 15–18 (DEGK), 40–43 (NAGH), Thr131, Arg145, Gln226, Thr241, and Arg313 each bind IMP. His43 acts as the Proton donor in catalysis. Position 309–315 (309–315 (ATTGRQR)) interacts with substrate. Residues Arg315, 341-343 (KLD), and 423-425 (STG) each bind GTP.

It belongs to the adenylosuccinate synthetase family. In terms of assembly, homodimer. The cofactor is Mg(2+).

The protein resides in the cytoplasm. The catalysed reaction is IMP + L-aspartate + GTP = N(6)-(1,2-dicarboxyethyl)-AMP + GDP + phosphate + 2 H(+). The protein operates within purine metabolism; AMP biosynthesis via de novo pathway; AMP from IMP: step 1/2. Its function is as follows. Plays an important role in the de novo pathway of purine nucleotide biosynthesis. Catalyzes the first committed step in the biosynthesis of AMP from IMP. This chain is Adenylosuccinate synthetase, found in Hydrogenovibrio crunogenus (strain DSM 25203 / XCL-2) (Thiomicrospira crunogena).